The sequence spans 285 residues: Bifunctional protein FolD (285 aa).

NADP(+) is bound by residues 165-167 (GRS) and Ser-190.

The protein belongs to the tetrahydrofolate dehydrogenase/cyclohydrolase family. In terms of assembly, homodimer.

It catalyses the reaction (6R)-5,10-methylene-5,6,7,8-tetrahydrofolate + NADP(+) = (6R)-5,10-methenyltetrahydrofolate + NADPH. The enzyme catalyses (6R)-5,10-methenyltetrahydrofolate + H2O = (6R)-10-formyltetrahydrofolate + H(+). It functions in the pathway one-carbon metabolism; tetrahydrofolate interconversion. Functionally, catalyzes the oxidation of 5,10-methylenetetrahydrofolate to 5,10-methenyltetrahydrofolate and then the hydrolysis of 5,10-methenyltetrahydrofolate to 10-formyltetrahydrofolate. In Ligilactobacillus salivarius (strain UCC118) (Lactobacillus salivarius), this protein is Bifunctional protein FolD.